A 716-amino-acid chain; its full sequence is UvrABC system protein C (716 aa).

The 81-residue stretch at 14–94 (AEPGCYLMKD…IKRHRPRFNI (81 aa)) folds into the GIY-YIG domain. One can recognise a UVR domain in the interval 206-241 (TELVERLHGRMDEAADALRFEDAARLRDQLQAVERS).

The protein belongs to the UvrC family. In terms of assembly, interacts with UvrB in an incision complex.

The protein resides in the cytoplasm. The UvrABC repair system catalyzes the recognition and processing of DNA lesions. UvrC both incises the 5' and 3' sides of the lesion. The N-terminal half is responsible for the 3' incision and the C-terminal half is responsible for the 5' incision. The protein is UvrABC system protein C of Anaeromyxobacter sp. (strain Fw109-5).